The primary structure comprises 233 residues: Inner kinetochore subunit fta4 (233 aa).

Thr189 and Thr191 each carry phosphothreonine.

It belongs to the NKP1 family. Component of the inner kinetochore constitutive centromere-associated network (CCAN) (also known as central kinetochore Sim4 complex in fission yeast), which is composed of at least cnl2, cnp3, cnp20, fta1, fta2, fta3, fta4, fta6, fta7, mal2, mhf1, mhf2, mis6, mis15, mis17, sim4 and wip1.

It localises to the nucleus. The protein resides in the chromosome. The protein localises to the centromere. It is found in the kinetochore. Component of the kinetochore, a multiprotein complex that assembles on centromeric DNA and attaches chromosomes to spindle microtubules, mediating chromosome segregation and sister chromatid segregation during meiosis and mitosis. Component of the inner kinetochore constitutive centromere-associated network (CCAN), which serves as a structural platform for outer kinetochore assembly. Fta2, fta3 and fta4 associate with the central core (cnt) and inner repeat (inr) region of the centromere. In Schizosaccharomyces pombe (strain 972 / ATCC 24843) (Fission yeast), this protein is Inner kinetochore subunit fta4 (fta4).